Reading from the N-terminus, the 312-residue chain is Ribosomal protein L11 methyltransferase (312 aa).

S-adenosyl-L-methionine is bound by residues threonine 163, glycine 184, aspartate 206, and asparagine 248.

Belongs to the methyltransferase superfamily. PrmA family.

Its subcellular location is the cytoplasm. The catalysed reaction is L-lysyl-[protein] + 3 S-adenosyl-L-methionine = N(6),N(6),N(6)-trimethyl-L-lysyl-[protein] + 3 S-adenosyl-L-homocysteine + 3 H(+). In terms of biological role, methylates ribosomal protein L11. This is Ribosomal protein L11 methyltransferase from Clostridium botulinum (strain 657 / Type Ba4).